A 134-amino-acid polypeptide reads, in one-letter code: U34-theraphotoxin-Cg1a (134 aa).

Residues 1–19 (MKLAVVFLLTTVVFTLAQS) form the signal peptide. 3 disulfides stabilise this stretch: cysteine 24/cysteine 35, cysteine 29/cysteine 53, and cysteine 63/cysteine 84. The tract at residues 97–134 (EQSSTSTSSTQGPITSSTVTTQSEATTETETTTAAEGK) is disordered. Positions 99–134 (SSTSTSSTQGPITSSTVTTQSEATTETETTTAAEGK) are enriched in low complexity.

The protein belongs to the neurotoxin 32 family. As to expression, expressed by the venom gland.

The protein localises to the secreted. The chain is U34-theraphotoxin-Cg1a from Chilobrachys guangxiensis (Chinese earth tiger tarantula).